A 527-amino-acid chain; its full sequence is Peptide chain release factor 3 (527 aa).

The tr-type G domain occupies 10-278 (DKRRTFAIIS…AFIEYAPAPL (269 aa)). Residues 19–26 (SHPDAGKT), 87–91 (DTPGH), and 141–144 (NKLD) each bind GTP.

This sequence belongs to the TRAFAC class translation factor GTPase superfamily. Classic translation factor GTPase family. PrfC subfamily.

It is found in the cytoplasm. Increases the formation of ribosomal termination complexes and stimulates activities of RF-1 and RF-2. It binds guanine nucleotides and has strong preference for UGA stop codons. It may interact directly with the ribosome. The stimulation of RF-1 and RF-2 is significantly reduced by GTP and GDP, but not by GMP. The sequence is that of Peptide chain release factor 3 from Pelobacter propionicus (strain DSM 2379 / NBRC 103807 / OttBd1).